The following is a 98-amino-acid chain: Small ribosomal subunit protein uS19 (98 aa).

Residues 77-98 (TRTYRGHAGGKSEKGGSAPRKK) form a disordered region.

It belongs to the universal ribosomal protein uS19 family.

Protein S19 forms a complex with S13 that binds strongly to the 16S ribosomal RNA. This is Small ribosomal subunit protein uS19 from Chlorobium phaeobacteroides (strain BS1).